Here is a 290-residue protein sequence, read N- to C-terminus: Concanavalin-A (290 aa).

An N-terminal signal peptide occupies residues 1–29 (MAISKKSSLFLPIFTFITMFLMVVNKVSS). Residues Asp119 and Arg139 each contribute to the a carbohydrate site. Asp119 lines the Ca(2+) pocket. Residues 149–163 (VIRNSTTIDFNAAYN) constitute a propeptide that is removed on maturation. Asn152 carries N-linked (GlcNAc...) asparagine glycosylation. Glu171 and Asp173 together coordinate Mn(2+). Asp173, Tyr175, Asn177, and Asp182 together coordinate Ca(2+). Mn(2+) contacts are provided by Asp182 and His187. 262 to 263 (LY) is an a carbohydrate binding site. Positions 282-290 (EIPDIATVV) are excised as a propeptide.

This sequence belongs to the leguminous lectin family. As to quaternary structure, homotetramer. Post-translationally, the mature chain consists of residues 164-281 followed by 30-148. To form a mature chain the precursor undergoes further post-translational modification after removal of the signal sequence; cleavage after Asn at positions Asn-148, Asn-163, and Asn-281 is followed by transposition and ligation (By formation of a new peptide bond) of residues 164-281 and 30-148.

Functionally, glucose/D-mannose/rhamnose specific lectin. Has hemagglutinating activity towards rabbit erythrocytes. Has mitogenic activity towards murine splenocytes that is inhibited by glucose. Inhibits HIV-1 reverse transcriptase with an IC(50) of 35 uM. Has a potent antiproliferative activity against L1210 leukemia cells in vitro that is not inhibited by glucose. Inhibits translation in cell-free rabbit reticulocyte system with an IC(50) of 2.08 uM. Lacks anti-fungal activity against M.arachidicola, B.cenera and F.oxysporum. The sequence is that of Concanavalin-A from Canavalia gladiata (Sword bean).